Consider the following 156-residue polypeptide: Small ribosomal subunit protein uS7 (156 aa).

This sequence belongs to the universal ribosomal protein uS7 family. Part of the 30S ribosomal subunit. Contacts proteins S9 and S11.

Its function is as follows. One of the primary rRNA binding proteins, it binds directly to 16S rRNA where it nucleates assembly of the head domain of the 30S subunit. Is located at the subunit interface close to the decoding center, probably blocks exit of the E-site tRNA. In Streptococcus pyogenes serotype M1, this protein is Small ribosomal subunit protein uS7.